Here is a 123-residue protein sequence, read N- to C-terminus: UPF0102 protein APP7_1414 (123 aa).

This sequence belongs to the UPF0102 family.

This is UPF0102 protein APP7_1414 from Actinobacillus pleuropneumoniae serotype 7 (strain AP76).